Here is a 328-residue protein sequence, read N- to C-terminus: 4-hydroxy-3-methylbut-2-enyl diphosphate reductase (328 aa).

Cys24 provides a ligand contact to [4Fe-4S] cluster. (2E)-4-hydroxy-3-methylbut-2-enyl diphosphate is bound by residues His55 and His88. Dimethylallyl diphosphate contacts are provided by His55 and His88. Residues His55 and His88 each contribute to the isopentenyl diphosphate site. Cys110 contributes to the [4Fe-4S] cluster binding site. Residue His138 participates in (2E)-4-hydroxy-3-methylbut-2-enyl diphosphate binding. His138 provides a ligand contact to dimethylallyl diphosphate. His138 is a binding site for isopentenyl diphosphate. Catalysis depends on Glu140, which acts as the Proton donor. Residue Thr178 coordinates (2E)-4-hydroxy-3-methylbut-2-enyl diphosphate. Position 208 (Cys208) interacts with [4Fe-4S] cluster. (2E)-4-hydroxy-3-methylbut-2-enyl diphosphate contacts are provided by Ser236, Ser237, Asn238, and Ser279. Ser236, Ser237, Asn238, and Ser279 together coordinate dimethylallyl diphosphate. Isopentenyl diphosphate contacts are provided by Ser236, Ser237, Asn238, and Ser279.

It belongs to the IspH family. It depends on [4Fe-4S] cluster as a cofactor.

The catalysed reaction is isopentenyl diphosphate + 2 oxidized [2Fe-2S]-[ferredoxin] + H2O = (2E)-4-hydroxy-3-methylbut-2-enyl diphosphate + 2 reduced [2Fe-2S]-[ferredoxin] + 2 H(+). It carries out the reaction dimethylallyl diphosphate + 2 oxidized [2Fe-2S]-[ferredoxin] + H2O = (2E)-4-hydroxy-3-methylbut-2-enyl diphosphate + 2 reduced [2Fe-2S]-[ferredoxin] + 2 H(+). Its pathway is isoprenoid biosynthesis; dimethylallyl diphosphate biosynthesis; dimethylallyl diphosphate from (2E)-4-hydroxy-3-methylbutenyl diphosphate: step 1/1. It participates in isoprenoid biosynthesis; isopentenyl diphosphate biosynthesis via DXP pathway; isopentenyl diphosphate from 1-deoxy-D-xylulose 5-phosphate: step 6/6. Functionally, catalyzes the conversion of 1-hydroxy-2-methyl-2-(E)-butenyl 4-diphosphate (HMBPP) into a mixture of isopentenyl diphosphate (IPP) and dimethylallyl diphosphate (DMAPP). Acts in the terminal step of the DOXP/MEP pathway for isoprenoid precursor biosynthesis. This is 4-hydroxy-3-methylbut-2-enyl diphosphate reductase from Ehrlichia ruminantium (strain Welgevonden).